Reading from the N-terminus, the 131-residue chain is Ribosome-binding factor A (131 aa).

This sequence belongs to the RbfA family. In terms of assembly, monomer. Binds 30S ribosomal subunits, but not 50S ribosomal subunits or 70S ribosomes.

It localises to the cytoplasm. In terms of biological role, one of several proteins that assist in the late maturation steps of the functional core of the 30S ribosomal subunit. Associates with free 30S ribosomal subunits (but not with 30S subunits that are part of 70S ribosomes or polysomes). Required for efficient processing of 16S rRNA. May interact with the 5'-terminal helix region of 16S rRNA. This chain is Ribosome-binding factor A, found in Vibrio vulnificus (strain CMCP6).